Reading from the N-terminus, the 317-residue chain is MPVQGSQRRLLGSLNSTPTATPRLGLAANQTGARCLEVSIPDGLFLSLGLVSLVENVLVVVAIARNRNLHSPMYCFICCLALSDLLVSGSNMLETAVILLLEAGALAARAAVVQQLDNVIDVITCSSMLSSLCFLGAIAVDRYISIFYALRYHSIVTLRRARRVVAAIWVASVLFSTLFIAYCDHAAVLLSLVVFFLAMLVLMAVLYVHMLARACQHAQGIAQLHKRQRPAHQGVGLKGAATLTILLGIFFLCWGPFFLHLTLIVLCPQHPTCSCIFKNFNLFLTLIICNAIIDPLIYAFRSQELRRTLKKVLLCSW.

Topologically, residues 1 to 37 are extracellular; the sequence is MPVQGSQRRLLGSLNSTPTATPRLGLAANQTGARCLE. Asparagine 29 carries an N-linked (GlcNAc...) asparagine glycan. Residues 38–63 form a helical membrane-spanning segment; sequence VSIPDGLFLSLGLVSLVENVLVVVAI. Residues 64-72 are Cytoplasmic-facing; that stretch reads ARNRNLHSP. A helical transmembrane segment spans residues 73–93; sequence MYCFICCLALSDLLVSGSNML. At 94–118 the chain is on the extracellular side; the sequence is ETAVILLLEAGALAARAAVVQQLDN. The helical transmembrane segment at 119-140 threads the bilayer; that stretch reads VIDVITCSSMLSSLCFLGAIAV. The Cytoplasmic portion of the chain corresponds to 141–163; the sequence is DRYISIFYALRYHSIVTLRRARR. Residues 164-183 traverse the membrane as a helical segment; it reads VVAAIWVASVLFSTLFIAYC. At 184-191 the chain is on the extracellular side; the sequence is DHAAVLLS. The chain crosses the membrane as a helical span at residues 192–211; the sequence is LVVFFLAMLVLMAVLYVHML. The Cytoplasmic segment spans residues 212–240; the sequence is ARACQHAQGIAQLHKRQRPAHQGVGLKGA. Residues 241 to 266 form a helical membrane-spanning segment; sequence ATLTILLGIFFLCWGPFFLHLTLIVL. Topologically, residues 267–279 are extracellular; the sequence is CPQHPTCSCIFKN. A helical membrane pass occupies residues 280 to 300; it reads FNLFLTLIICNAIIDPLIYAF. The Cytoplasmic segment spans residues 301 to 317; the sequence is RSQELRRTLKKVLLCSW. A lipid anchor (S-palmitoyl cysteine) is attached at cysteine 315.

The protein belongs to the G-protein coupled receptor 1 family. Interacts with MGRN1, but does not undergo MGRN1-mediated ubiquitination; this interaction competes with GNAS-binding and thus inhibits agonist-induced cAMP production. Interacts with OPN3; the interaction results in a decrease in MC1R-mediated cAMP signaling and ultimately a decrease in melanin production in melanocytes.

It localises to the cell membrane. Receptor for MSH (alpha, beta and gamma) and ACTH. The activity of this receptor is mediated by G proteins which activate adenylate cyclase. Mediates melanogenesis, the production of eumelanin (black/brown) and phaeomelanin (red/yellow), via regulation of cAMP signaling in melanocytes. This is Melanocyte-stimulating hormone receptor (MC1R) from Trachypithecus auratus (Javan langur).